The primary structure comprises 193 residues: MAKLYFYYASMNAGKSTNLLQADFNYRERGMQTLLFTAGIDTRYKQGVIKSRIGLEAPAIAFFEESSLWDIIQEQHVKNPLHCILIDEAQFLNKNQVFELARVCDDLNIPVLCYGLRTDFQAELFEGSKYLLAIADKLAEIKSVCFCGAKATMNLRVDENKKPIRHGQQTEIGGNERYIALCRRHFIEKLNSL.

Residues 9–16 and 87–90 contribute to the ATP site; these read ASMNAGKS and DEAQ. Glu88 functions as the Proton acceptor in the catalytic mechanism. The Zn(2+) site is built by Cys145, Cys147, Cys182, and His185.

This sequence belongs to the thymidine kinase family. As to quaternary structure, homotetramer.

It localises to the cytoplasm. The enzyme catalyses thymidine + ATP = dTMP + ADP + H(+). In Zymomonas mobilis subsp. mobilis (strain ATCC 31821 / ZM4 / CP4), this protein is Thymidine kinase.